The chain runs to 294 residues: Cytidine deaminase (294 aa).

2 consecutive CMP/dCMP-type deaminase domains span residues 48 to 168 (DEDA…FGPK) and 186 to 294 (LTGD…VLLG). 89 to 91 (NME) contacts substrate. Zn(2+) is bound at residue His102. The active-site Proton donor is Glu104. Zn(2+) contacts are provided by Cys129 and Cys132.

This sequence belongs to the cytidine and deoxycytidylate deaminase family. In terms of assembly, homodimer. Zn(2+) is required as a cofactor.

It catalyses the reaction cytidine + H2O + H(+) = uridine + NH4(+). The enzyme catalyses 2'-deoxycytidine + H2O + H(+) = 2'-deoxyuridine + NH4(+). Functionally, this enzyme scavenges exogenous and endogenous cytidine and 2'-deoxycytidine for UMP synthesis. This Salmonella enteritidis PT4 (strain P125109) protein is Cytidine deaminase.